Consider the following 592-residue polypeptide: Glutamine--fructose-6-phosphate aminotransferase [isomerizing] (592 aa).

Cys-2 acts as the Nucleophile; for GATase activity in catalysis. The Glutamine amidotransferase type-2 domain occupies 2–217; the sequence is CGIVGYVGRD…DGEIADLTPD (216 aa). SIS domains lie at 277–416 and 441–582; these read IPFK…EREN and VAEK…VDQP. The active-site For Fru-6P isomerization activity is the Lys-587.

Homodimer.

It is found in the cytoplasm. It carries out the reaction D-fructose 6-phosphate + L-glutamine = D-glucosamine 6-phosphate + L-glutamate. In terms of biological role, catalyzes the first step in hexosamine metabolism, converting fructose-6P into glucosamine-6P using glutamine as a nitrogen source. The protein is Glutamine--fructose-6-phosphate aminotransferase [isomerizing] of Aquifex aeolicus (strain VF5).